The following is a 1372-amino-acid chain: uncharacterized protein (1372 aa).

Residues Met-1 to Gln-67 form a disordered region. Residues Met-17 to Gly-28 are compositionally biased toward polar residues. Residues Asn-75–Lys-143 adopt a coiled-coil conformation. 5 disordered regions span residues Asn-178 to Asp-199, His-238 to Ser-287, Glu-380 to Arg-414, Gln-427 to Pro-447, and Glu-486 to Ile-531. Composition is skewed to low complexity over residues Gly-184–Gly-198 and His-238–Gly-251. Composition is skewed to polar residues over residues Thr-257–Ser-287 and Thr-399–Pro-408. A coiled-coil region spans residues Lys-409–Ser-438. A compositionally biased stretch (basic and acidic residues) spans Glu-486–Ser-499. The segment covering Ala-514 to Ala-523 has biased composition (low complexity). Residues Leu-539–His-580 are a coiled coil. The segment covering Val-652 to Asn-673 has biased composition (low complexity). 5 disordered regions span residues Val-652–Lys-679, Ser-799–His-820, Ser-860–Val-897, Ser-1151–Lys-1181, and Ser-1231–Lys-1250. Polar residues-rich tracts occupy residues Ser-860–Ile-871 and Ser-1151–Pro-1160.

This is an uncharacterized protein from Drosophila melanogaster (Fruit fly).